The sequence spans 345 residues: MSCPTSAGVLQTHQLLNDNSILIRDEIYGEELVSEPVLVELLQSAEVQRLQGICQHGVTGFLGITPRVTRLEHSVGAFILVRRVGAALDEQVAALLHDISHTTLSHVIDHALSKPGEGSYHEVHKARYLKTTRLPDIVAKHGISQKVFEEELFPLVEMPSPQLCADRLDYALRDAVSFGKLAMEDAQKVVSSLRAFPSATTARRLLVLDDAEVALTLSRAYTTTDKDVWSNPAHIDMYERTGRVIGELVEAGSVEDKVLWQVSDAEFWTMLRQAANPEQRRAIERLETEGVPEDDGLELPHCAKIRTLDPDVWPRGEKQPAPLSIVLPTWGTERQQYILSRTQHR.

An HD domain is found at 70–171; it reads RLEHSVGAFI…QLCADRLDYA (102 aa).

As to quaternary structure, interacts with cns1.

It localises to the lipid droplet. The protein operates within secondary metabolite biosynthesis. Metal-dependent phosphohydrolase; part of the gene cluster that mediates the biosynthesis of cordycepin (COR) and pentostatin (PTN), two adenosine analogs with related bioactivity profiles as both mimic adenosine and can inhibit some of the processes that are adenosine dependent. Within the pathway, cns2 catalyzes dephosphorylation of 3'-AMP to produce 2'-carbonyl-3'-deoxyadenosine (2'-C-3'-dA). The first step of cordycepin biosynthesis involves hydroxyl phosphorylation of the 3'-OH position on adenosine to produce adenosine-3'-monophosphate (3'-AMP), catalyzed by kinase activity of cns3. Next, 3'-AMP is dephosphorylated to 2'-carbonyl-3'-deoxyadenosine by cns2, which is finally converted to cordycepin (3'-deoxyadenosine) by the oxidoreductase cns1. In Cordyceps militaris (strain CM01) (Caterpillar fungus), this protein is Metal-dependent phosphohydrolase cns2.